The following is a 37-amino-acid chain: Photosystem I reaction center subunit VIII (37 aa).

The chain crosses the membrane as a helical span at residues 7–27; that stretch reads LPAIFVPLVGLVFPAIAMVSL.

Belongs to the PsaI family.

The protein resides in the plastid. Its subcellular location is the chloroplast thylakoid membrane. In terms of biological role, may help in the organization of the PsaL subunit. The chain is Photosystem I reaction center subunit VIII from Morus indica (Mulberry).